Here is a 160-residue protein sequence, read N- to C-terminus: Major pollen allergen Cor a 1 isoforms 5, 6, 11 and 16 (160 aa).

This sequence belongs to the BetVI family.

In Corylus avellana (European hazel), this protein is Major pollen allergen Cor a 1 isoforms 5, 6, 11 and 16.